A 163-amino-acid polypeptide reads, in one-letter code: MAEDGPQKQQLEMPLVLDQDLTQQMRLRVESLKQRGEKKQDGEKLIRPAESVYRLDFIQQQKLQFDHWNVVLDKPGKVTITGTSQNWTPDLTNLMTRQLLDPAAIFWRKEDSDAMDWNEADALEFGERLSDLAKIRKVMYFLITFGEGVEPANLKASVVFNQL.

An N-acetylalanine modification is found at alanine 2.

Belongs to the olfactory marker protein family. As to quaternary structure, interacts with BEX1 and BEX2. As to expression, uniquely associated with mature olfactory receptor neurons.

The protein localises to the cytoplasm. Functionally, may act as a modulator of the olfactory signal-transduction cascade. This is Olfactory marker protein (Omp) from Mus musculus (Mouse).